The chain runs to 180 residues: Oligoribonuclease (180 aa).

Positions 7–170 (LIWIDLEMTG…DDIRESIAEL (164 aa)) constitute an Exonuclease domain. Tyr128 is a catalytic residue.

Belongs to the oligoribonuclease family.

It localises to the cytoplasm. Functionally, 3'-to-5' exoribonuclease specific for small oligoribonucleotides. The chain is Oligoribonuclease from Pseudomonas fluorescens (strain ATCC BAA-477 / NRRL B-23932 / Pf-5).